Consider the following 150-residue polypeptide: Large ribosomal subunit protein uL15 (150 aa).

Positions 1-52 (MDLSNLKPAEGSVRKNSKRIGRGEGSGKGGTATRGHKGAKSRSGYSKKIGFE) are disordered. Residues 23–32 (GEGSGKGGTA) show a composition bias toward gly residues.

This sequence belongs to the universal ribosomal protein uL15 family. As to quaternary structure, part of the 50S ribosomal subunit.

Binds to the 23S rRNA. This Christiangramia forsetii (strain DSM 17595 / CGMCC 1.15422 / KT0803) (Gramella forsetii) protein is Large ribosomal subunit protein uL15.